Here is a 97-residue protein sequence, read N- to C-terminus: Signal recognition particle 19 kDa protein (97 aa).

It belongs to the SRP19 family. In terms of assembly, part of the signal recognition particle protein translocation system, which is composed of SRP and FtsY. Archaeal SRP consists of a 7S RNA molecule of 300 nucleotides and two protein subunits: SRP54 and SRP19.

The protein resides in the cytoplasm. Involved in targeting and insertion of nascent membrane proteins into the cytoplasmic membrane. Binds directly to 7S RNA and mediates binding of the 54 kDa subunit of the SRP. The chain is Signal recognition particle 19 kDa protein from Methanocella arvoryzae (strain DSM 22066 / NBRC 105507 / MRE50).